The chain runs to 101 residues: Urease subunit beta (101 aa).

The protein belongs to the urease beta subunit family. Heterotrimer of UreA (gamma), UreB (beta) and UreC (alpha) subunits. Three heterotrimers associate to form the active enzyme.

It is found in the cytoplasm. The enzyme catalyses urea + 2 H2O + H(+) = hydrogencarbonate + 2 NH4(+). Its pathway is nitrogen metabolism; urea degradation; CO(2) and NH(3) from urea (urease route): step 1/1. The chain is Urease subunit beta from Bradyrhizobium sp. (strain BTAi1 / ATCC BAA-1182).